A 297-amino-acid polypeptide reads, in one-letter code: Light-independent protochlorophyllide reductase iron-sulfur ATP-binding protein (297 aa).

ATP is bound by residues 41 to 46 (GIGKST) and lysine 70. Serine 45 lines the Mg(2+) pocket. Residues cysteine 126 and cysteine 160 each coordinate [4Fe-4S] cluster. ATP-binding positions include 211–212 (NR) and 235–237 (PDL).

This sequence belongs to the NifH/BchL/ChlL family. Homodimer. Protochlorophyllide reductase is composed of three subunits; BchL, BchN and BchB. It depends on [4Fe-4S] cluster as a cofactor.

The enzyme catalyses chlorophyllide a + oxidized 2[4Fe-4S]-[ferredoxin] + 2 ADP + 2 phosphate = protochlorophyllide a + reduced 2[4Fe-4S]-[ferredoxin] + 2 ATP + 2 H2O. The protein operates within porphyrin-containing compound metabolism; bacteriochlorophyll biosynthesis (light-independent). In terms of biological role, component of the dark-operative protochlorophyllide reductase (DPOR) that uses Mg-ATP and reduced ferredoxin to reduce ring D of protochlorophyllide (Pchlide) to form chlorophyllide a (Chlide). This reaction is light-independent. The L component serves as a unique electron donor to the NB-component of the complex, and binds Mg-ATP. This is Light-independent protochlorophyllide reductase iron-sulfur ATP-binding protein from Methylorubrum extorquens (strain CM4 / NCIMB 13688) (Methylobacterium extorquens).